The sequence spans 1161 residues: Nardilysin (1161 aa).

Positions 1–18 are cleaved as a signal peptide; sequence MLRRVAVAAVFATGRKLR. Disordered regions lie at residues 42-105 and 130-218; these read KPFP…KSPS and VEGK…KKTT. Ser-85, Ser-91, and Ser-93 each carry phosphoserine. A compositionally biased stretch (acidic residues) spans 138–209; the sequence is TDEEEEEEEE…EENELEELEE (72 aa). His-244 provides a ligand contact to Zn(2+). The active-site Proton acceptor is Glu-247. 2 residues coordinate Zn(2+): His-248 and Glu-325.

The protein belongs to the peptidase M16 family. As to quaternary structure, interacts with BACE1 and NRG1. The cofactor is Zn(2+). As to expression, testis, and in a lower level in brain, heart and adrenal glands.

It localises to the mitochondrion. The protein resides in the cell projection. Its subcellular location is the dendrite. It catalyses the reaction Hydrolysis of polypeptides, preferably at -Xaa-|-Arg-Lys-, and less commonly at -Arg-|-Arg-Xaa-, in which Xaa is not Arg or Lys.. Its function is as follows. Cleaves peptide substrates on the N-terminus of arginine residues in dibasic pairs. Is a critical activator of BACE1- and ADAM17-mediated pro-neuregulin ectodomain shedding, involved in the positive regulation of axonal maturation and myelination. Required for proper functioning of 2-oxoglutarate dehydrogenase (OGDH). This Rattus norvegicus (Rat) protein is Nardilysin.